A 174-amino-acid chain; its full sequence is Crossover junction endodeoxyribonuclease RuvC (174 aa).

Residues aspartate 8, glutamate 69, and aspartate 141 contribute to the active site. Aspartate 8, glutamate 69, and aspartate 141 together coordinate Mg(2+).

It belongs to the RuvC family. Homodimer which binds Holliday junction (HJ) DNA. The HJ becomes 2-fold symmetrical on binding to RuvC with unstacked arms; it has a different conformation from HJ DNA in complex with RuvA. In the full resolvosome a probable DNA-RuvA(4)-RuvB(12)-RuvC(2) complex forms which resolves the HJ. Requires Mg(2+) as cofactor.

Its subcellular location is the cytoplasm. The catalysed reaction is Endonucleolytic cleavage at a junction such as a reciprocal single-stranded crossover between two homologous DNA duplexes (Holliday junction).. Its function is as follows. The RuvA-RuvB-RuvC complex processes Holliday junction (HJ) DNA during genetic recombination and DNA repair. Endonuclease that resolves HJ intermediates. Cleaves cruciform DNA by making single-stranded nicks across the HJ at symmetrical positions within the homologous arms, yielding a 5'-phosphate and a 3'-hydroxyl group; requires a central core of homology in the junction. The consensus cleavage sequence is 5'-(A/T)TT(C/G)-3'. Cleavage occurs on the 3'-side of the TT dinucleotide at the point of strand exchange. HJ branch migration catalyzed by RuvA-RuvB allows RuvC to scan DNA until it finds its consensus sequence, where it cleaves and resolves the cruciform DNA. The polypeptide is Crossover junction endodeoxyribonuclease RuvC (Xanthomonas oryzae pv. oryzae (strain PXO99A)).